The sequence spans 433 residues: uncharacterized protein (433 aa).

Residues 36–58 (YYYYVQLAFKMLVGVLKNLPVVY) form a helical membrane-spanning segment. The disordered stretch occupies residues 169–433 (VRVPSRDLQP…GEGRDLPEDN (265 aa)). Acidic residues-rich tracts occupy residues 216–227 (GEPGENGDESDE) and 234–254 (GDED…YESD). Composition is skewed to basic and acidic residues over residues 265–280 (EPDR…RGSE), 354–364 (GGRRPARRDSP), and 422–433 (RRGEGRDLPEDN).

The protein resides in the host membrane. This is an uncharacterized protein from Psittacid herpesvirus 1 (isolate Amazon parrot/-/97-0001/1997) (PsHV-1).